We begin with the raw amino-acid sequence, 426 residues long: Histidine--tRNA ligase (426 aa).

This sequence belongs to the class-II aminoacyl-tRNA synthetase family. As to quaternary structure, homodimer.

It is found in the cytoplasm. The enzyme catalyses tRNA(His) + L-histidine + ATP = L-histidyl-tRNA(His) + AMP + diphosphate + H(+). This chain is Histidine--tRNA ligase, found in Streptococcus equi subsp. zooepidemicus (strain H70).